A 397-amino-acid polypeptide reads, in one-letter code: CCA-adding enzyme (397 aa).

2 residues coordinate ATP: glycine 26 and arginine 29. Glycine 26 and arginine 29 together coordinate CTP. Mg(2+) is bound by residues aspartate 39 and aspartate 41. Residues arginine 110, aspartate 153, arginine 156, arginine 159, and arginine 162 each contribute to the ATP site. CTP contacts are provided by arginine 110, aspartate 153, arginine 156, arginine 159, and arginine 162.

Belongs to the tRNA nucleotidyltransferase/poly(A) polymerase family. Bacterial CCA-adding enzyme type 3 subfamily. Homodimer. Mg(2+) serves as cofactor.

The catalysed reaction is a tRNA precursor + 2 CTP + ATP = a tRNA with a 3' CCA end + 3 diphosphate. It carries out the reaction a tRNA with a 3' CCA end + 2 CTP + ATP = a tRNA with a 3' CCACCA end + 3 diphosphate. Its function is as follows. Catalyzes the addition and repair of the essential 3'-terminal CCA sequence in tRNAs without using a nucleic acid template. Adds these three nucleotides in the order of C, C, and A to the tRNA nucleotide-73, using CTP and ATP as substrates and producing inorganic pyrophosphate. tRNA 3'-terminal CCA addition is required both for tRNA processing and repair. Also involved in tRNA surveillance by mediating tandem CCA addition to generate a CCACCA at the 3' terminus of unstable tRNAs. While stable tRNAs receive only 3'-terminal CCA, unstable tRNAs are marked with CCACCA and rapidly degraded. The sequence is that of CCA-adding enzyme from Bacillus mycoides (strain KBAB4) (Bacillus weihenstephanensis).